Reading from the N-terminus, the 98-residue chain is Small ribosomal subunit protein bS6 (98 aa).

It belongs to the bacterial ribosomal protein bS6 family.

Functionally, binds together with bS18 to 16S ribosomal RNA. The protein is Small ribosomal subunit protein bS6 of Limosilactobacillus reuteri (strain DSM 20016) (Lactobacillus reuteri).